Here is a 474-residue protein sequence, read N- to C-terminus: Putative response regulator NtrX-like (474 aa).

A Response regulatory domain is found at 5–121; it reads DVLIVDDEES…KLVILLTRAC (117 aa). A 4-aspartylphosphate modification is found at Asp54. Residues 143–368 form the Sigma-54 factor interaction domain; the sequence is LVGECSVTLK…LRNVVEWTLI (226 aa). ATP-binding positions include 171 to 178 and 231 to 240; these read GKVGSGKE and ANNGTLYIDE.

Functionally, member of the two-component regulatory system RC0849/RC0948. The chain is Putative response regulator NtrX-like from Rickettsia conorii (strain ATCC VR-613 / Malish 7).